The primary structure comprises 149 residues: Large ribosomal subunit protein bL9 (149 aa).

The protein belongs to the bacterial ribosomal protein bL9 family.

Binds to the 23S rRNA. This chain is Large ribosomal subunit protein bL9, found in Vibrio cholerae serotype O1 (strain ATCC 39541 / Classical Ogawa 395 / O395).